The sequence spans 331 residues: Tyrosine--tRNA ligase (331 aa).

Residues Y31, Y155, Q159, D162, and Q177 each coordinate L-tyrosine. A 'KMSKS' region motif is present at residues 218–222 (KMSKS). K221 is a binding site for ATP.

The protein belongs to the class-I aminoacyl-tRNA synthetase family. TyrS type 4 subfamily. In terms of assembly, homodimer.

Its subcellular location is the cytoplasm. It carries out the reaction tRNA(Tyr) + L-tyrosine + ATP = L-tyrosyl-tRNA(Tyr) + AMP + diphosphate + H(+). In terms of biological role, catalyzes the attachment of tyrosine to tRNA(Tyr) in a two-step reaction: tyrosine is first activated by ATP to form Tyr-AMP and then transferred to the acceptor end of tRNA(Tyr). The protein is Tyrosine--tRNA ligase of Thermoplasma volcanium (strain ATCC 51530 / DSM 4299 / JCM 9571 / NBRC 15438 / GSS1).